A 920-amino-acid chain; its full sequence is 3-hydroxy-3-methylglutaryl-coenzyme A reductase (920 aa).

The chain crosses the membrane as a helical span at residues 12 to 32; the sequence is FCASHPWEVIVALLTITACML. Residue asparagine 37 is glycosylated (N-linked (GlcNAc...) asparagine). The interval 62–85 is disordered; sequence GAGSGASGTIPPSSMGGSATSSRH. Positions 71–82 are enriched in polar residues; the sequence is IPPSSMGGSATS. An SSD domain is found at 106–263; the sequence is DVILMTIVRC…MTFYPACLSL (158 aa). Transmembrane regions (helical) follow at residues 107-129, 136-156, 170-190, 208-228, and 237-257; these read VILM…CSLH, VLGI…TAII, LFFL…QLAL, LLGP…GVGT, and VLCM…MTFY. Asparagine 342 and asparagine 346 each carry an N-linked (GlcNAc...) asparagine glycan. Residues 364–384 form a helical membrane-spanning segment; that stretch reads SADHIVISIVLIALVVKFICF. The tract at residues 385–498 is linker; the sequence is DNRDPLPDQL…EEIVSIVHAG (114 aa). Asparagine 443 and asparagine 475 each carry an N-linked (GlcNAc...) asparagine glycan. The tract at residues 499-829 is catalytic; the sequence is GTHCPLHKIE…TCTMPSLEVG (331 aa). Active-site charge relay system residues include glutamate 586, lysine 717, and aspartate 793. Residues asparagine 797 and asparagine 802 are each glycosylated (N-linked (GlcNAc...) asparagine). Histidine 892 acts as the Proton donor in catalysis. 2 N-linked (GlcNAc...) asparagine glycosylation sites follow: asparagine 896 and asparagine 910.

Belongs to the HMG-CoA reductase family. Highly expressed in embryonic gonadal mesoderm, where expression is initially broad, and then becomes restricted to a segmental pattern at stage 11. Expression is then further restricted to a cluster of cells in each of parasegments 10, 11 and 12, corresponding to the developing gonadal mesoderm. Not expressed in pole cells.

The protein localises to the endoplasmic reticulum membrane. It catalyses the reaction (R)-mevalonate + 2 NADP(+) + CoA = (3S)-3-hydroxy-3-methylglutaryl-CoA + 2 NADPH + 2 H(+). Its pathway is metabolic intermediate biosynthesis; (R)-mevalonate biosynthesis; (R)-mevalonate from acetyl-CoA: step 3/3. The activity of HMG-CoA-reductase is suppressed by exogenous mevalonate. Its function is as follows. Synthesis of mevalonate for the production of non-sterol isoprenoids, which are essential for growth differentiation. Provides spatial information during embryogenesis to guide migrating primordial germ cells (the pole cells) from the ectoderm to the mesoderm. Also required for association of the pole cells with the gonadal mesoderm. The polypeptide is 3-hydroxy-3-methylglutaryl-coenzyme A reductase (Hmgcr) (Drosophila melanogaster (Fruit fly)).